The primary structure comprises 271 residues: NADPH-dependent 7-cyano-7-deazaguanine reductase (271 aa).

81-83 (IES) provides a ligand contact to substrate. Residue 83–84 (SK) coordinates NADPH. Cys177 serves as the catalytic Thioimide intermediate. The active-site Proton donor is Asp184. 216-217 (HE) contributes to the substrate binding site. 245 to 246 (RG) is an NADPH binding site.

The protein belongs to the GTP cyclohydrolase I family. QueF type 2 subfamily. As to quaternary structure, homodimer.

It localises to the cytoplasm. The catalysed reaction is 7-aminomethyl-7-carbaguanine + 2 NADP(+) = 7-cyano-7-deazaguanine + 2 NADPH + 3 H(+). It functions in the pathway tRNA modification; tRNA-queuosine biosynthesis. In terms of biological role, catalyzes the NADPH-dependent reduction of 7-cyano-7-deazaguanine (preQ0) to 7-aminomethyl-7-deazaguanine (preQ1). The chain is NADPH-dependent 7-cyano-7-deazaguanine reductase from Xanthomonas axonopodis pv. citri (strain 306).